We begin with the raw amino-acid sequence, 249 residues long: DNA repair protein RecO (249 aa).

The protein belongs to the RecO family.

In terms of biological role, involved in DNA repair and RecF pathway recombination. The chain is DNA repair protein RecO from Polaromonas naphthalenivorans (strain CJ2).